Reading from the N-terminus, the 469-residue chain is Glutamine synthetase (469 aa).

The GS beta-grasp domain maps to 15–96; it reads NDVKFIDVRF…INFFIHDPIT (82 aa). The GS catalytic domain maps to 104–469; that stretch reads PRNIAKKAEA…PHEFELYFDI (366 aa). Mg(2+) contacts are provided by E129 and E131. E205 lines the ATP pocket. Residues E210 and E218 each contribute to the Mg(2+) site. Position 221–223 (221–223) interacts with ATP; it reads YKF. L-glutamate is bound by residues 262–263 and G263; that span reads NG. H267 contributes to the Mg(2+) binding site. Residues 269–271 and S271 contribute to the ATP site; that span reads HQS. Residues R320, E326, and R338 each contribute to the L-glutamate site. Residues R338, R343, and K352 each coordinate ATP. Position 357 (E357) interacts with Mg(2+). An L-glutamate-binding site is contributed by R359. Y397 is modified (O-AMP-tyrosine).

The protein belongs to the glutamine synthetase family. As to quaternary structure, oligomer of 12 subunits arranged in the form of two hexagons. It depends on Mg(2+) as a cofactor.

It localises to the cytoplasm. It catalyses the reaction L-glutamate + NH4(+) + ATP = L-glutamine + ADP + phosphate + H(+). Its activity is regulated as follows. The activity of this enzyme could be controlled by adenylation under conditions of abundant glutamine. Its function is as follows. Catalyzes the ATP-dependent biosynthesis of glutamine from glutamate and ammonia. The chain is Glutamine synthetase from Streptomyces filamentosus (Streptomyces roseosporus).